A 188-amino-acid chain; its full sequence is Elongation factor P (188 aa).

Belongs to the elongation factor P family.

The protein localises to the cytoplasm. The protein operates within protein biosynthesis; polypeptide chain elongation. Functionally, involved in peptide bond synthesis. Stimulates efficient translation and peptide-bond synthesis on native or reconstituted 70S ribosomes in vitro. Probably functions indirectly by altering the affinity of the ribosome for aminoacyl-tRNA, thus increasing their reactivity as acceptors for peptidyl transferase. In Rickettsia prowazekii (strain Madrid E), this protein is Elongation factor P (efp).